The following is an 81-amino-acid chain: Putative membrane protein insertion efficiency factor (81 aa).

It belongs to the UPF0161 family.

It is found in the cell inner membrane. Functionally, could be involved in insertion of integral membrane proteins into the membrane. The protein is Putative membrane protein insertion efficiency factor of Thermotoga maritima (strain ATCC 43589 / DSM 3109 / JCM 10099 / NBRC 100826 / MSB8).